The following is an 89-amino-acid chain: Small ribosomal subunit protein uS15 (89 aa).

This sequence belongs to the universal ribosomal protein uS15 family. As to quaternary structure, part of the 30S ribosomal subunit. Forms a bridge to the 50S subunit in the 70S ribosome, contacting the 23S rRNA.

Its function is as follows. One of the primary rRNA binding proteins, it binds directly to 16S rRNA where it helps nucleate assembly of the platform of the 30S subunit by binding and bridging several RNA helices of the 16S rRNA. Functionally, forms an intersubunit bridge (bridge B4) with the 23S rRNA of the 50S subunit in the ribosome. The chain is Small ribosomal subunit protein uS15 from Corynebacterium efficiens (strain DSM 44549 / YS-314 / AJ 12310 / JCM 11189 / NBRC 100395).